Consider the following 404-residue polypeptide: Sorting nexin-32 (404 aa).

Residues 1–10 show a composition bias toward basic and acidic residues; that stretch reads MEEQHQEAGN. The interval 1–29 is disordered; that stretch reads MEEQHQEAGNESKPSSTSVDLQGDSPLQV. The segment covering 11 to 20 has biased composition (polar residues); the sequence is ESKPSSTSVD. One can recognise a PX domain in the interval 21–168; it reads LQGDSPLQVE…SVFLEYSQDL (148 aa). The stretch at 255-336 forms a coiled coil; that stretch reads TQEVNQLKRS…KARTRNREVR (82 aa).

This sequence belongs to the sorting nexin family.

Functionally, may be involved in several stages of intracellular trafficking. The sequence is that of Sorting nexin-32 (Snx32) from Mus musculus (Mouse).